Here is a 308-residue protein sequence, read N- to C-terminus: Oxygen-dependent coproporphyrinogen-III oxidase (308 aa).

Substrate is bound at residue Ser-92. 2 residues coordinate a divalent metal cation: His-96 and His-106. His-106 functions as the Proton donor in the catalytic mechanism. Residue 108 to 110 coordinates substrate; that stretch reads NVR. A divalent metal cation is bound by residues His-145 and His-175. An important for dimerization region spans residues 240 to 275; that stretch reads YVEFNLVWDRGTLFGLQTGGRTESILMSMPPLVRWE. Residue 258–260 participates in substrate binding; sequence GGR.

Belongs to the aerobic coproporphyrinogen-III oxidase family. In terms of assembly, homodimer. A divalent metal cation serves as cofactor.

The protein localises to the cytoplasm. The enzyme catalyses coproporphyrinogen III + O2 + 2 H(+) = protoporphyrinogen IX + 2 CO2 + 2 H2O. Its pathway is porphyrin-containing compound metabolism; protoporphyrin-IX biosynthesis; protoporphyrinogen-IX from coproporphyrinogen-III (O2 route): step 1/1. Its function is as follows. Involved in the heme biosynthesis. Catalyzes the aerobic oxidative decarboxylation of propionate groups of rings A and B of coproporphyrinogen-III to yield the vinyl groups in protoporphyrinogen-IX. The protein is Oxygen-dependent coproporphyrinogen-III oxidase of Salmonella paratyphi A (strain ATCC 9150 / SARB42).